The sequence spans 273 residues: Glucosamine-6-phosphate deaminase (273 aa).

Residue Asp-72 is the Proton acceptor; for enolization step of the active site. Residue Asp-141 is the For ring-opening step of the active site. His-143 acts as the Proton acceptor; for ring-opening step in catalysis. Catalysis depends on Glu-148, which acts as the For ring-opening step.

The protein belongs to the glucosamine/galactosamine-6-phosphate isomerase family. As to quaternary structure, homohexamer.

Its subcellular location is the cytoplasm. The enzyme catalyses alpha-D-glucosamine 6-phosphate + H2O = beta-D-fructose 6-phosphate + NH4(+). Its pathway is nucleotide-sugar biosynthesis; UDP-N-acetyl-alpha-D-glucosamine biosynthesis; alpha-D-glucosamine 6-phosphate from D-fructose 6-phosphate: step 1/1. Its function is as follows. Catalyzes the reversible conversion of alpha-D-glucosamine 6-phosphate (GlcN-6P) into beta-D-fructose 6-phosphate (Fru-6P) and ammonium ion, a regulatory reaction step in de novo uridine diphosphate-N-acetyl-alpha-D-glucosamine (UDP-GlcNAc) biosynthesis via hexosamine pathway. The polypeptide is Glucosamine-6-phosphate deaminase (Drosophila melanogaster (Fruit fly)).